A 189-amino-acid polypeptide reads, in one-letter code: Cytidylate kinase (189 aa).

7 to 15 (GPPGSGKTS) serves as a coordination point for ATP.

Belongs to the cytidylate kinase family. Type 2 subfamily.

It localises to the cytoplasm. It catalyses the reaction CMP + ATP = CDP + ADP. The catalysed reaction is dCMP + ATP = dCDP + ADP. This is Cytidylate kinase from Saccharolobus islandicus (strain L.S.2.15 / Lassen #1) (Sulfolobus islandicus).